The sequence spans 69 residues: uncharacterized protein (69 aa).

The chain crosses the membrane as a helical span at residues Met32–Ile54.

It is found in the membrane. This is an uncharacterized protein from Sinorhizobium fredii (strain NBRC 101917 / NGR234).